Here is a 433-residue protein sequence, read N- to C-terminus: Serendipity locus protein delta (433 aa).

Positions 1-90 (MDTCFFCGAV…TQKRLTTQLK (90 aa)) constitute a ZAD domain. Positions 4, 7, 61, and 64 each coordinate Zn(2+). The interval 141–162 (DTEIKREFVDEEEEEDDDDDDE) is disordered. The segment covering 149–162 (VDEEEEEDDDDDDE) has biased composition (acidic residues). The Nuclear localization signal motif lies at 187 to 193 (PTKKRVK). 7 C2H2-type zinc fingers span residues 194–217 (QECTTCGKVYNSWYQLQKHISEEH), 223–245 (HICPICGVIRRDEEYLELHMNLH), 251–273 (KQCRYCPKSFSRPVNTLRHMRMH), 279–301 (YQCEKCGLRFSQDNLLYNHRLRH), 308–330 (IICSICNVSFKSRKTFNHHTLIH), 337–359 (HYCSVCPKSFTERYTLKMHMKTH), and 405–428 (GFCLICNTNFENKKELEHHLQFDH).

As to quaternary structure, homodimer (via ZAD domain) in solution. Binds DNA as a homodimer. N-terminal regions of the protein are required, in addition to the zinc fingers, for the specificity of chromatin-binding. Predominantly localized to the sub- and supraesophagal ganglia and the ventral nerve cord in the embryo, after dorsal closure.

The protein resides in the nucleus. In terms of biological role, transcriptional activator that controls bicoid gene expression during oogenesis. Found in transcriptionally active cells. Binds to specific sites on polytene chromosomes of third instar larvae. Binds to the consensus DNA sequence 5'-YTAGAGATGGRAA-3'. This is Serendipity locus protein delta (Sry-delta) from Drosophila melanogaster (Fruit fly).